The following is a 500-amino-acid chain: MTNATTLTDLTIAEARDAMAKGAFTPLELTNAHLARMEAGRGLNAFITETPDLARMQAERSGERLRAGKAGPMEGIPIGIKDLFCTEGVRTTAGSKILDGFVPPYESTVSANLAKAGAVMLGKTNLDEFAMGSSNKTSASGPVINPWTRTDDDEQLVPGGSSGGSAAAVAGRLAMAATGTDTGGSIRQPAAFCGLVGLKPTYGRCSRWGVVAFASSLDQAGPMTRTVRDAAIMLKAMAGHDPMDGTSAPVEVPNFEAVLSGDIRGLRVGLPRQYRPEGLDPEIAALWDRGAEMLKDAGATLVEVDLPHTKYALATYYIVAPAEASSNLARYDGVRYGLRVPGETLDEMYCKTRAAGFGEEVRRRVLIGTYALSAGYYDAYYLKAQKVRALIAQDFKTAFETVDVLLTPTTPSAAFGLNETIDDPITMYLNDVFTVPTSLAGLPGLSVPVGLSSRGLPLGLQLVGRYFDEETVLNAGLALERASAFTQKPAFLTGALEGQI.

Residues lysine 81 and serine 161 each act as charge relay system in the active site. Serine 185 (acyl-ester intermediate) is an active-site residue.

It belongs to the amidase family. GatA subfamily. Heterotrimer of A, B and C subunits.

The enzyme catalyses L-glutamyl-tRNA(Gln) + L-glutamine + ATP + H2O = L-glutaminyl-tRNA(Gln) + L-glutamate + ADP + phosphate + H(+). Its function is as follows. Allows the formation of correctly charged Gln-tRNA(Gln) through the transamidation of misacylated Glu-tRNA(Gln) in organisms which lack glutaminyl-tRNA synthetase. The reaction takes place in the presence of glutamine and ATP through an activated gamma-phospho-Glu-tRNA(Gln). This Rhodospirillum rubrum (strain ATCC 11170 / ATH 1.1.1 / DSM 467 / LMG 4362 / NCIMB 8255 / S1) protein is Glutamyl-tRNA(Gln) amidotransferase subunit A.